Consider the following 483-residue polypeptide: MKHYVAVDIGASSGRLILGKLVNEKLQLEEIHRFKNGFTYRDGHERWEIDQLMQEIFIGLEKVKQLGISECVLGIDTWGVDYVLIGASGEKLADPISYRDKRTLNAVQNLTSEYPREYIYKKTGIQFMELNTLYQLYVEERDLLERAEKILLIPDYIGYVLTGVKVAETTNSSTTQMLNLREQLFDKDLLSHLNIDVEKFAPLTDAGTYLGKVKEEWLEEYDIPNCDVVTVATHDTASAVVGTPAEGENWAFLSSGTWSLIGMELSAPINNEAAFKENYTNEWGAYGTYRFLKNIMGLWIVQEIARMDDYKHSFAEMAEEASNYPYFKQIINVNDARFNNPENMVDEIKLYCQETGQTIPETIGELTNCVYGSLALYYALELEKMTEITGKKIEKLYIVGGGSNVAMLNQLTAKLAGIEVFAGPSEATAIGNLVVQMINQGEIESMRAGRKIIRNSFEIGEFSCGDVRFEEIKERFTKVLEFN.

11-15 (ASSGR) provides a ligand contact to ATP. Residues Gly-79 and 234-236 (HDT) contribute to the substrate site. Asp-235 acts as the Proton acceptor in catalysis. Residue Thr-257 participates in ATP binding. Asn-294 is a substrate binding site. Gln-302 lines the ATP pocket. A disulfide bridge links Cys-352 with Cys-369. An ATP-binding site is contributed by Gly-401.

It belongs to the rhamnulokinase family. Mg(2+) is required as a cofactor.

It carries out the reaction L-rhamnulose + ATP = L-rhamnulose 1-phosphate + ADP + H(+). Its pathway is carbohydrate degradation; L-rhamnose degradation; glycerone phosphate from L-rhamnose: step 2/3. Its function is as follows. Involved in the catabolism of L-rhamnose (6-deoxy-L-mannose). Catalyzes the transfer of the gamma-phosphate group from ATP to the 1-hydroxyl group of L-rhamnulose to yield L-rhamnulose 1-phosphate. The chain is Rhamnulokinase from Listeria monocytogenes serotype 4b (strain CLIP80459).